Here is an 81-residue protein sequence, read N- to C-terminus: Sec-independent protein translocase protein TatA (81 aa).

Residues 1–21 (MGGISIWQLLIVALIVILLFG) form a helical membrane-spanning segment. The disordered stretch occupies residues 34 to 81 (GAVKGFKNAMTPEDENKSLDDKEKDQTAATSQQAAEKQPETESKDKQA). Basic and acidic residues-rich tracts occupy residues 47 to 59 (DENK…EKDQ) and 70 to 81 (KQPETESKDKQA).

The protein belongs to the TatA/E family. As to quaternary structure, the Tat system comprises two distinct complexes: a TatABC complex, containing multiple copies of TatA, TatB and TatC subunits, and a separate TatA complex, containing only TatA subunits. Substrates initially bind to the TatABC complex, which probably triggers association of the separate TatA complex to form the active translocon.

The protein localises to the cell inner membrane. Functionally, part of the twin-arginine translocation (Tat) system that transports large folded proteins containing a characteristic twin-arginine motif in their signal peptide across membranes. TatA could form the protein-conducting channel of the Tat system. This is Sec-independent protein translocase protein TatA from Shewanella frigidimarina (strain NCIMB 400).